Here is a 137-residue protein sequence, read N- to C-terminus: Large ribosomal subunit protein uL16 (137 aa).

This sequence belongs to the universal ribosomal protein uL16 family. As to quaternary structure, part of the 50S ribosomal subunit.

Its function is as follows. Binds 23S rRNA and is also seen to make contacts with the A and possibly P site tRNAs. This chain is Large ribosomal subunit protein uL16, found in Stenotrophomonas maltophilia (strain R551-3).